The following is a 629-amino-acid chain: Smc-like protein Sph1 (629 aa).

Coiled-coil stretches lie at residues 139–282 (LETE…LLDD) and 318–487 (AETT…NQFD).

Belongs to the Sph1/Sph2 family.

Its subcellular location is the cytoplasm. May play a role in a late step of replication. The sequence is that of Smc-like protein Sph1 (sph1) from Halobacterium salinarum (strain ATCC 29341 / DSM 671 / R1).